Here is a 302-residue protein sequence, read N- to C-terminus: CRISPR-associated endonuclease Cas1 1 (302 aa).

Residues glutamate 159, histidine 219, and glutamate 234 each coordinate Mn(2+).

Belongs to the CRISPR-associated endonuclease Cas1 family. In terms of assembly, homodimer, forms a heterotetramer with a Cas2 homodimer. The cofactor is Mg(2+). Mn(2+) is required as a cofactor.

CRISPR (clustered regularly interspaced short palindromic repeat), is an adaptive immune system that provides protection against mobile genetic elements (viruses, transposable elements and conjugative plasmids). CRISPR clusters contain spacers, sequences complementary to antecedent mobile elements, and target invading nucleic acids. CRISPR clusters are transcribed and processed into CRISPR RNA (crRNA). Acts as a dsDNA endonuclease. Involved in the integration of spacer DNA into the CRISPR cassette. This chain is CRISPR-associated endonuclease Cas1 1, found in Pyrobaculum aerophilum (strain ATCC 51768 / DSM 7523 / JCM 9630 / CIP 104966 / NBRC 100827 / IM2).